Consider the following 363-residue polypeptide: MNFLHSTLDRLREFTPVSNTSTFRTNGQITPEEFVAAGDYLVFKFPTWSWADASPTSKRANYLPAGKQFLVTRGVPCHRRLDDDFAGDAGHDETVVRDGEDFRGDGPHSPGDDEDGWLRTGGLAASQEARVRDVRTVDESGEMGEREDDEDDIPDMEDDDDDDEAIIRDPKADNASSSRRTYTIYIAYTPYYRTPRLYLSGYLSSSQPLPPHLMMEDIVGDYKDKTVTLEDFPYFSNNIKMASIHPCKHASVMKTLLDRADAALKLRREKQRQGKAVPGSKDTGMEGLVDDFEKTKIGDKKAVLEGLKAGGNGNDEWEVLQHDQDFANEEEEVAIRVDQYLVVFLKFMASVTPGIEHDFTMGV.

Composition is skewed to basic and acidic residues over residues 84–106 and 129–138; these read DFAGDAGHDETVVRDGEDFRGDG and ARVRDVRTVD. The segment at 84 to 171 is flexible region; the sequence is DFAGDAGHDE…DDEAIIRDPK (88 aa). The segment at 84–174 is disordered; sequence DFAGDAGHDE…AIIRDPKADN (91 aa). Positions 139–164 are enriched in acidic residues; it reads ESGEMGEREDDEDDIPDMEDDDDDDE. The active-site Glycyl thioester intermediate is C247. The segment at 251–339 is handle region; the sequence is SVMKTLLDRA…EEEVAIRVDQ (89 aa).

This sequence belongs to the ATG3 family. Monomer. Interacts with atg8 through an intermediate thioester bond through the C-terminal Gly of atg8. Interacts with the C-terminal region of the E1-like atg7 enzyme. Also interacts with the atg12-atg5 conjugate.

The protein resides in the cytoplasm. Its function is as follows. E2 conjugating enzyme required for the cytoplasm to vacuole transport (Cvt) and autophagy. Required for selective autophagic degradation of the nucleus (nucleophagy) as well as for mitophagy which contributes to regulate mitochondrial quantity and quality by eliminating the mitochondria to a basal level to fulfill cellular energy requirements and preventing excess ROS production. Responsible for the E2-like covalent binding of phosphatidylethanolamine to the C-terminal Gly of atg8. The atg12-atg5 conjugate plays a role of an E3 and promotes the transfer of atg8 from atg3 to phosphatidylethanolamine (PE). This step is required for the membrane association of atg8. The formation of the atg8-phosphatidylethanolamine conjugate is essential for autophagy and for the cytoplasm to vacuole transport (Cvt). The atg8-PE conjugate mediates tethering between adjacent membranes and stimulates membrane hemifusion, leading to expansion of the autophagosomal membrane during autophagy. Required for normal mycelial growth and conidiogenesis, and regulates sclerotial formation. Plays an essential role in pathogenesis. The polypeptide is Autophagy-related protein 3 (Botryotinia fuckeliana (strain BcDW1) (Noble rot fungus)).